A 234-amino-acid polypeptide reads, in one-letter code: Ribonuclease 3 (234 aa).

Residues 13-136 (YITLEKALGY…LMAGVYLEAG (124 aa)) form the RNase III domain. Glu49 is a Mg(2+) binding site. Asp53 is an active-site residue. Positions 122 and 125 each coordinate Mg(2+). Glu125 is an active-site residue. The DRBM domain occupies 163–232 (DYKTALQELT…AYQALQKLKG (70 aa)).

The protein belongs to the ribonuclease III family. In terms of assembly, homodimer. It depends on Mg(2+) as a cofactor.

It localises to the cytoplasm. It carries out the reaction Endonucleolytic cleavage to 5'-phosphomonoester.. Its function is as follows. Digests double-stranded RNA. Involved in the processing of primary rRNA transcript to yield the immediate precursors to the large and small rRNAs (23S and 16S). Processes some mRNAs, and tRNAs when they are encoded in the rRNA operon. Processes pre-crRNA and tracrRNA of type II CRISPR loci if present in the organism. The sequence is that of Ribonuclease 3 from Helicobacter acinonychis (strain Sheeba).